A 278-amino-acid polypeptide reads, in one-letter code: MHKRLFITLLGFIILLAGCDYSKEENQTGIFYNVFVKSMDGFLHFLGRVFQDNYGFAIISIVLIVRFILLPFMLIQVKNMHMMREKTKVVQPELDAIRDKMKHATSQEERNAANQLLMKKYQSYGINPLKNMLGCLPVLIQMPILMGLYMSLKYPSSHGITEYPHFLWFDLTQPDLIMTIIAAIMYFVQPLVNSIHYPKDQRKTYYFMMVFSPIFITYASLHSAAALGLYWSISAAFLIVQMHFAHSHYKKVALHEAKKLKQKLEQNKDNSELLTEES.

An N-terminal signal peptide occupies residues 1–18 (MHKRLFITLLGFIILLAG). Cysteine 19 carries the N-palmitoyl cysteine lipid modification. Cysteine 19 carries the S-diacylglycerol cysteine lipid modification. A run of 4 helical transmembrane segments spans residues 55 to 75 (GFAI…FMLI), 132 to 152 (MLGC…YMSL), 176 to 196 (LIMT…NSIH), and 224 to 244 (AAAL…QMHF).

It belongs to the OXA1/ALB3/YidC family. Type 2 subfamily.

Its subcellular location is the cell membrane. Its function is as follows. Required for the insertion and/or proper folding and/or complex formation of integral membrane proteins into the membrane. Involved in integration of membrane proteins that insert both dependently and independently of the Sec translocase complex, as well as at least some lipoproteins. The sequence is that of Membrane protein insertase YidC 2 from Staphylococcus epidermidis (strain ATCC 12228 / FDA PCI 1200).